Reading from the N-terminus, the 172-residue chain is Cystatin-like cysteine protease inhibitor EPIC4 (172 aa).

An N-terminal signal peptide occupies residues 1-17 (MRASLSILVAFPALAAA). The Secondary area of contact signature appears at 71 to 75 (QVVAG). Positions 129 to 172 (EAATASSSSTPAPTPASTSTSASSSEETMLQSSVQQRAMFSDFV) are disordered. A compositionally biased stretch (low complexity) spans 130–156 (AATASSSSTPAPTPASTSTSASSSEET). Residues 157-166 (MLQSSVQQRA) show a composition bias toward polar residues.

Belongs to the cystatin family.

Its subcellular location is the secreted. In terms of biological role, secreted effector that interacts with and inhibits host apoplastic pathogenesis-related papain-like cysteine proteases. Inhibition of host proteases by a pathogen extracellular protease inhibitor forms a specific type of defense-counterdefense mechanism between plants and microbial pathogens. The polypeptide is Cystatin-like cysteine protease inhibitor EPIC4 (Phytophthora infestans (Potato late blight agent)).